Here is a 73-residue protein sequence, read N- to C-terminus: Probable cytochrome b-c1 complex subunit 8 (73 aa).

Residues 1 to 42 (MGQASKVFGKQITYSVSPFQQKLFVNYFKNAIPHLRRGVKDN) lie on the Mitochondrial matrix side of the membrane. The chain crosses the membrane as a helical span at residues 43–60 (FFCSVPYFAALYITVNWA). Over 61-73 (NETYHNEMKDHWY) the chain is Mitochondrial intermembrane.

Belongs to the UQCRQ/QCR8 family. Component of the ubiquinol-cytochrome c oxidoreductase (cytochrome b-c1 complex, complex III, CIII), a multisubunit enzyme composed of 3 respiratory subunits cytochrome b, cytochrome c1 and Rieske protein, 2 core protein subunits, and additional low-molecular weight protein subunits. The complex exists as an obligatory dimer and forms supercomplexes (SCs) in the inner mitochondrial membrane with cytochrome c oxidase (complex IV, CIV).

It localises to the mitochondrion inner membrane. In terms of biological role, component of the ubiquinol-cytochrome c oxidoreductase, a multisubunit transmembrane complex that is part of the mitochondrial electron transport chain which drives oxidative phosphorylation. The respiratory chain contains 3 multisubunit complexes succinate dehydrogenase (complex II, CII), ubiquinol-cytochrome c oxidoreductase (cytochrome b-c1 complex, complex III, CIII) and cytochrome c oxidase (complex IV, CIV), that cooperate to transfer electrons derived from NADH and succinate to molecular oxygen, creating an electrochemical gradient over the inner membrane that drives transmembrane transport and the ATP synthase. The cytochrome b-c1 complex catalyzes electron transfer from ubiquinol to cytochrome c, linking this redox reaction to translocation of protons across the mitochondrial inner membrane, with protons being carried across the membrane as hydrogens on the quinol. In the process called Q cycle, 2 protons are consumed from the matrix, 4 protons are released into the intermembrane space and 2 electrons are passed to cytochrome c. The protein is Probable cytochrome b-c1 complex subunit 8 of Dictyostelium discoideum (Social amoeba).